The sequence spans 156 residues: Acyl carrier protein, mitochondrial (156 aa).

A mitochondrion-targeting transit peptide spans 1-68 (MAVRVLCACV…GRVTQLCRQY (68 aa)). The region spanning 77-152 (EGIKDRVLYV…EIVDYIADKK (76 aa)) is the Carrier domain. Lysine 88 carries the N6-acetyllysine modification. Residue serine 112 is modified to O-(pantetheine 4'-phosphoryl)serine.

In terms of assembly, mammalian complex I is composed of 45 different subunits. Interacts with ETFRF1. Identified in a complex composed of MALSU1, MIEF1 upstream open reading frame protein and NDUFAB1; within the trimeric complex MIEF1 upstream open reading frame protein functions as a bridging scaffold that interacts with MALSU1 on one side, and with NDUFAB1 on the other side. The complex interacts with the mitochondrial large ribosomal subunit. Interacts with alpha-1-microglobulin chain; this interaction is required for the maintenance of mitochondrial redox homeostasis. Component of the mitochondrial core iron-sulfur cluster (ISC) complex composed of NFS1, LYRM4, NDUFAB1, ISCU, FXN, and FDX2; this complex is a heterohexamer containing two copies of each monomer. Component of the cyteine desulfurase complex composed of NFS1, LYRM4 and NDUFAB1; this complex contributes to the stability and cysteine desulfurase activity of NFS1. Phosphopantetheinylation at Ser-112 is essential for interactions with LYR motif-containing proteins.

It localises to the mitochondrion. In terms of biological role, carrier of the growing fatty acid chain in fatty acid biosynthesis. Accessory and non-catalytic subunit of the mitochondrial membrane respiratory chain NADH dehydrogenase (Complex I), which functions in the transfer of electrons from NADH to the respiratory chain. Accessory protein, of the core iron-sulfur cluster (ISC) assembly complex, that regulates, in association with LYRM4, the stability and the cysteine desulfurase activity of NFS1 and participates in the [2Fe-2S] clusters assembly on the scaffolding protein ISCU. The core iron-sulfur cluster (ISC) assembly complex is involved in the de novo synthesis of a [2Fe-2S] cluster, the first step of the mitochondrial iron-sulfur protein biogenesis. This process is initiated by the cysteine desulfurase complex (NFS1:LYRM4:NDUFAB1) that produces persulfide which is delivered on the scaffold protein ISCU in a FXN-dependent manner. Then this complex is stabilized by FDX2 which provides reducing equivalents to accomplish the [2Fe-2S] cluster assembly. Finally, the [2Fe-2S] cluster is transferred from ISCU to chaperone proteins, including HSCB, HSPA9 and GLRX5. This chain is Acyl carrier protein, mitochondrial, found in Bos taurus (Bovine).